We begin with the raw amino-acid sequence, 432 residues long: Enolase (432 aa).

Gln-168 contributes to the (2R)-2-phosphoglycerate binding site. Catalysis depends on Glu-210, which acts as the Proton donor. Residues Asp-247, Glu-288, and Asp-315 each contribute to the Mg(2+) site. The (2R)-2-phosphoglycerate site is built by Lys-340, Arg-369, Ser-370, and Lys-391. The Proton acceptor role is filled by Lys-340.

Belongs to the enolase family. It depends on Mg(2+) as a cofactor.

It is found in the cytoplasm. The protein resides in the secreted. It localises to the cell surface. It catalyses the reaction (2R)-2-phosphoglycerate = phosphoenolpyruvate + H2O. The protein operates within carbohydrate degradation; glycolysis; pyruvate from D-glyceraldehyde 3-phosphate: step 4/5. Its function is as follows. Catalyzes the reversible conversion of 2-phosphoglycerate (2-PG) into phosphoenolpyruvate (PEP). It is essential for the degradation of carbohydrates via glycolysis. The sequence is that of Enolase from Microcystis aeruginosa (strain NIES-843 / IAM M-2473).